Consider the following 216-residue polypeptide: Pyrrolidone-carboxylate peptidase (216 aa).

Catalysis depends on residues glutamate 80, cysteine 143, and histidine 168.

The protein belongs to the peptidase C15 family. In terms of assembly, homotetramer.

It localises to the cytoplasm. It carries out the reaction Release of an N-terminal pyroglutamyl group from a polypeptide, the second amino acid generally not being Pro.. Its function is as follows. Removes 5-oxoproline from various penultimate amino acid residues except L-proline. This Cupriavidus taiwanensis (strain DSM 17343 / BCRC 17206 / CCUG 44338 / CIP 107171 / LMG 19424 / R1) (Ralstonia taiwanensis (strain LMG 19424)) protein is Pyrrolidone-carboxylate peptidase.